A 380-amino-acid chain; its full sequence is Pregnancy-associated glycoprotein 1 (380 aa).

Residues 1-15 (MKWLVLLGLVAFSEC) form the signal peptide. Residues 16–53 (IVKIPLRRLKTMRNVVSGKNMLNNFLKEHAYSLSQISF) constitute a propeptide, activation peptide. 2 N-linked (GlcNAc...) asparagine glycosylation sites follow: N57 and N74. One can recognise a Peptidase A1 domain in the interval 71–377 (YMGNITIGTP…DRGNDRIGLA (307 aa)). D89 is an active-site residue. An intrachain disulfide couples C102 to C107. Residues N125 and N182 are each glycosylated (N-linked (GlcNAc...) asparagine). An intrachain disulfide couples C261 to C265. D270 is an active-site residue. A disulfide bridge connects residues C303 and C337.

The protein belongs to the peptidase A1 family. N-Glycosylated; the glycans terminate in either N-acetyl-galactosamine (GalNAc) or N-acetyllactosamine. Terminal GalNAc on Asn-linked glycans is greatly reduced prior to parturition while lactosamine-type N-glycans remain unaltered. In terms of tissue distribution, trophoblast and placental tissue. Produced specifically in the invasive binucleate cells of the placenta. Becomes detectable in maternal serum soon after implantation.

It is found in the secreted. It localises to the extracellular space. Its function is as follows. Appears to be proteolytically inactive. This is Pregnancy-associated glycoprotein 1 from Bos taurus (Bovine).